Reading from the N-terminus, the 846-residue chain is Translation initiation factor IF-2 (846 aa).

The segment at 94-263 (QRSPEEIQAE…HGFQNPTGPV (170 aa)) is disordered. The span at 96-135 (SPEEIQAEQKRELDERRAAENAARDKVEAEVRQRNEEQAR) shows a compositional bias: basic and acidic residues. 2 stretches are compositionally biased toward low complexity: residues 136-148 (RQAA…APAP) and 158-176 (AAPV…ASED). Composition is skewed to basic and acidic residues over residues 177 to 206 (AAAR…RGEA) and 230 to 239 (TTDEESDGAR). Residues 240–253 (RGRGGKSKLKKRNQ) show a composition bias toward basic residues. Residues 346–513 (SRAPVVTVMG…AVLLQAEILE (168 aa)) enclose the tr-type G domain. Residues 355–362 (GHVDHGKT) are G1. 355–362 (GHVDHGKT) contributes to the GTP binding site. A G2 region spans residues 380–384 (GITQH). Residues 401–404 (DTPG) form a G3 region. Residues 401–405 (DTPGH) and 455–458 (NKID) each bind GTP. The segment at 455–458 (NKID) is G4. The G5 stretch occupies residues 491–493 (SAK).

Belongs to the TRAFAC class translation factor GTPase superfamily. Classic translation factor GTPase family. IF-2 subfamily.

It is found in the cytoplasm. In terms of biological role, one of the essential components for the initiation of protein synthesis. Protects formylmethionyl-tRNA from spontaneous hydrolysis and promotes its binding to the 30S ribosomal subunits. Also involved in the hydrolysis of GTP during the formation of the 70S ribosomal complex. This chain is Translation initiation factor IF-2, found in Pseudomonas putida (strain ATCC 47054 / DSM 6125 / CFBP 8728 / NCIMB 11950 / KT2440).